We begin with the raw amino-acid sequence, 228 residues long: Cytidylate kinase (228 aa).

Gly17–Thr25 is an ATP binding site.

It belongs to the cytidylate kinase family. Type 1 subfamily.

The protein localises to the cytoplasm. The catalysed reaction is CMP + ATP = CDP + ADP. It carries out the reaction dCMP + ATP = dCDP + ADP. This is Cytidylate kinase from Paraburkholderia xenovorans (strain LB400).